Here is a 365-residue protein sequence, read N- to C-terminus: Flagellar P-ring protein (365 aa).

The N-terminal stretch at 1 to 19 is a signal peptide; the sequence is MIKFLSALILLLVTTAAQA.

It belongs to the FlgI family. The basal body constitutes a major portion of the flagellar organelle and consists of four rings (L,P,S, and M) mounted on a central rod.

It localises to the periplasm. The protein localises to the bacterial flagellum basal body. In terms of biological role, assembles around the rod to form the L-ring and probably protects the motor/basal body from shearing forces during rotation. In Shigella dysenteriae serotype 1 (strain Sd197), this protein is Flagellar P-ring protein.